Consider the following 276-residue polypeptide: Type II pantothenate kinase (276 aa).

8 to 15 contacts ATP; that stretch reads DAGGTLTK. Glutamate 76 (proton acceptor) is an active-site residue. ATP-binding positions include threonine 105, 127–131, phenylalanine 143, and serine 230; that span reads GGTIM.

The protein belongs to the type II pantothenate kinase family. Homodimer.

It localises to the cytoplasm. The enzyme catalyses (R)-pantothenate + ATP = (R)-4'-phosphopantothenate + ADP + H(+). The protein operates within cofactor biosynthesis; coenzyme A biosynthesis; CoA from (R)-pantothenate: step 1/5. Catalyzes the phosphorylation of pantothenate (Pan), the first step in CoA biosynthesis. The polypeptide is Type II pantothenate kinase (Bacillus anthracis).